The primary structure comprises 253 residues: AA9 family lytic polysaccharide monooxygenase F (253 aa).

Positions 1-16 are cleaved as a signal peptide; it reads MKVLATLLASVGLVAA. His-17 contacts Cu(2+). An N-linked (GlcNAc...) asparagine glycan is attached at Asn-22. Disulfide bonds link Cys-75–Cys-193 and Cys-163–Cys-253. His-105 provides a ligand contact to Cu(2+). N-linked (GlcNAc...) asparagine glycosylation occurs at Asn-143. Positions 179 and 188 each coordinate O2. Cu(2+) is bound at residue Tyr-190.

Belongs to the polysaccharide monooxygenase AA9 family. Cu(2+) serves as cofactor.

Its subcellular location is the secreted. The catalysed reaction is [(1-&gt;4)-beta-D-glucosyl]n+m + reduced acceptor + O2 = 4-dehydro-beta-D-glucosyl-[(1-&gt;4)-beta-D-glucosyl]n-1 + [(1-&gt;4)-beta-D-glucosyl]m + acceptor + H2O.. Functionally, lytic polysaccharide monooxygenase (LPMO) that depolymerizes crystalline and amorphous polysaccharides via the oxidation of scissile alpha- or beta-(1-4)-glycosidic bonds, yielding C1 or C4 oxidation products. Catalysis by LPMOs requires the reduction of the active-site copper from Cu(II) to Cu(I) by a reducing agent and H(2)O(2) or O(2) as a cosubstrate. The sequence is that of AA9 family lytic polysaccharide monooxygenase F from Podospora anserina (strain S / ATCC MYA-4624 / DSM 980 / FGSC 10383) (Pleurage anserina).